Reading from the N-terminus, the 316-residue chain is Beta-ketoacyl-[acyl-carrier-protein] synthase III (316 aa).

Active-site residues include C112 and H243. Residues 244–248 form an ACP-binding region; that stretch reads QANLR. N273 is an active-site residue.

This sequence belongs to the thiolase-like superfamily. FabH family. As to quaternary structure, homodimer.

The protein localises to the cytoplasm. It catalyses the reaction malonyl-[ACP] + acetyl-CoA + H(+) = 3-oxobutanoyl-[ACP] + CO2 + CoA. It participates in lipid metabolism; fatty acid biosynthesis. Functionally, catalyzes the condensation reaction of fatty acid synthesis by the addition to an acyl acceptor of two carbons from malonyl-ACP. Catalyzes the first condensation reaction which initiates fatty acid synthesis and may therefore play a role in governing the total rate of fatty acid production. Possesses both acetoacetyl-ACP synthase and acetyl transacylase activities. Its substrate specificity determines the biosynthesis of branched-chain and/or straight-chain of fatty acids. The polypeptide is Beta-ketoacyl-[acyl-carrier-protein] synthase III (Actinobacillus succinogenes (strain ATCC 55618 / DSM 22257 / CCUG 43843 / 130Z)).